We begin with the raw amino-acid sequence, 443 residues long: Xaa-Pro dipeptidase (443 aa).

The Mn(2+) site is built by Asp246, Asp257, His339, Glu384, and Glu423.

This sequence belongs to the peptidase M24B family. Bacterial-type prolidase subfamily. It depends on Mn(2+) as a cofactor.

It carries out the reaction Xaa-L-Pro dipeptide + H2O = an L-alpha-amino acid + L-proline. In terms of biological role, splits dipeptides with a prolyl residue in the C-terminal position. In Yersinia pestis bv. Antiqua (strain Nepal516), this protein is Xaa-Pro dipeptidase.